The following is a 171-amino-acid chain: MADPARAKRLAKRISTIVASAIEYEIKDPRLAGVTITDSKVTNDLHDATLYYTVLGRSLDEEPDYAGAAAALEKAKGVLRTKVGAGTGVRFTPTLAFVRDTVPDTAHRMEELLARARAADEDLARVREGAKHAGDADPYRVSGVEEEAGGSGEVQAEFDAEDTGDRNRQDD.

Basic and acidic residues predominate over residues 126-138 (VREGAKHAGDADP). A disordered region spans residues 126-171 (VREGAKHAGDADPYRVSGVEEEAGGSGEVQAEFDAEDTGDRNRQDD).

The protein belongs to the RbfA family. In terms of assembly, monomer. Binds 30S ribosomal subunits, but not 50S ribosomal subunits or 70S ribosomes.

It localises to the cytoplasm. Functionally, one of several proteins that assist in the late maturation steps of the functional core of the 30S ribosomal subunit. Associates with free 30S ribosomal subunits (but not with 30S subunits that are part of 70S ribosomes or polysomes). Required for efficient processing of 16S rRNA. May interact with the 5'-terminal helix region of 16S rRNA. The sequence is that of Ribosome-binding factor A from Mycobacterium sp. (strain JLS).